Consider the following 124-residue polypeptide: Cytochrome c oxidase subunit 4 isoform 1, mitochondrial (124 aa).

Lys4 carries the post-translational modification N6-acetyllysine; alternate. At Lys4 the chain carries N6-succinyllysine; alternate. Ser31 and Ser33 each carry phosphoserine. Lys35 carries the post-translational modification N6-acetyllysine; alternate. At Lys35 the chain carries N6-succinyllysine; alternate. Lys42 carries the N6-acetyllysine modification.

Belongs to the cytochrome c oxidase IV family. Component of the cytochrome c oxidase (complex IV, CIV), a multisubunit enzyme composed of 14 subunits. The complex is composed of a catalytic core of 3 subunits MT-CO1, MT-CO2 and MT-CO3, encoded in the mitochondrial DNA, and 11 supernumerary subunits COX4I, COX5A, COX5B, COX6A, COX6B, COX6C, COX7A, COX7B, COX7C, COX8 and NDUFA4, which are encoded in the nuclear genome. The complex exists as a monomer or a dimer and forms supercomplexes (SCs) in the inner mitochondrial membrane with NADH-ubiquinone oxidoreductase (complex I, CI) and ubiquinol-cytochrome c oxidoreductase (cytochrome b-c1 complex, complex III, CIII), resulting in different assemblies (supercomplex SCI(1)III(2)IV(1) and megacomplex MCI(2)III(2)IV(2)). Interacts with PHB2; the interaction decreases in absence of SPHK2. Interacts with AFG1L. Interacts with ABCB7; this interaction allows the regulation of cellular iron homeostasis and cellular reactive oxygen species (ROS) levels in cardiomyocytes. Interacts with FLVCR2; this interaction occurs in the absence of heme and is disrupted upon heme binding. Interacts with IRGC.

The protein resides in the mitochondrion inner membrane. It functions in the pathway energy metabolism; oxidative phosphorylation. Functionally, component of the cytochrome c oxidase, the last enzyme in the mitochondrial electron transport chain which drives oxidative phosphorylation. The respiratory chain contains 3 multisubunit complexes succinate dehydrogenase (complex II, CII), ubiquinol-cytochrome c oxidoreductase (cytochrome b-c1 complex, complex III, CIII) and cytochrome c oxidase (complex IV, CIV), that cooperate to transfer electrons derived from NADH and succinate to molecular oxygen, creating an electrochemical gradient over the inner membrane that drives transmembrane transport and the ATP synthase. Cytochrome c oxidase is the component of the respiratory chain that catalyzes the reduction of oxygen to water. Electrons originating from reduced cytochrome c in the intermembrane space (IMS) are transferred via the dinuclear copper A center (CU(A)) of subunit 2 and heme A of subunit 1 to the active site in subunit 1, a binuclear center (BNC) formed by heme A3 and copper B (CU(B)). The BNC reduces molecular oxygen to 2 water molecules using 4 electrons from cytochrome c in the IMS and 4 protons from the mitochondrial matrix. This is Cytochrome c oxidase subunit 4 isoform 1, mitochondrial (COX4I1) from Saimiri sciureus (Common squirrel monkey).